The primary structure comprises 554 residues: Glucose-6-phosphate isomerase (554 aa).

The Proton donor role is filled by Glu-359. Catalysis depends on residues His-390 and Lys-518.

Belongs to the GPI family.

The protein localises to the cytoplasm. It catalyses the reaction alpha-D-glucose 6-phosphate = beta-D-fructose 6-phosphate. The protein operates within carbohydrate biosynthesis; gluconeogenesis. Its pathway is carbohydrate degradation; glycolysis; D-glyceraldehyde 3-phosphate and glycerone phosphate from D-glucose: step 2/4. Functionally, catalyzes the reversible isomerization of glucose-6-phosphate to fructose-6-phosphate. This is Glucose-6-phosphate isomerase from Pseudomonas fluorescens (strain Pf0-1).